A 264-amino-acid chain; its full sequence is H-2 class II histocompatibility antigen, E-Q beta chain (264 aa).

The N-terminal stretch at 1–26 is a signal peptide; that stretch reads MVWLPRVPCVAAVILLLTVLSPPVAL. A beta-1 region spans residues 27 to 121; that stretch reads VRDSRPWFLE…IFDNFLVRRR (95 aa). Topologically, residues 27–225 are extracellular; it reads VRDSRPWFLE…KAQSTSAQNK (199 aa). Cystine bridges form between Cys-38/Cys-106 and Cys-144/Cys-200. Asn-46 is a glycosylation site (N-linked (GlcNAc...) asparagine). A beta-2 region spans residues 122 to 225; sequence VEPTVTVYPT…KAQSTSAQNK (104 aa). Positions 124–214 constitute an Ig-like C1-type domain; it reads PTVTVYPTKT…PSLTDPVTVE (91 aa). The chain crosses the membrane as a helical span at residues 226 to 246; that stretch reads MLSGVGGFVLGLLFLGAGLFI. Over 247-264 the chain is Cytoplasmic; it reads YFRNQKGQSGLQPTGLLS.

This sequence belongs to the MHC class II family.

The protein resides in the membrane. The chain is H-2 class II histocompatibility antigen, E-Q beta chain from Mus musculus (Mouse).